A 170-amino-acid polypeptide reads, in one-letter code: Putative calmodulin-like protein 6 (170 aa).

4 consecutive EF-hand domains span residues 8 to 43 (QQIS…LGMA), 44 to 79 (PSQE…KLYE), 84 to 119 (DDEE…LGEE), and 120 to 155 (MTED…TWNI). Residues Asp21, Asn23, Asp25, Cys27, Glu32, Asp57, Asp59, Asn61, Thr63, Glu68, Asp97, Asp99, Asn101, Glu108, Asp133, Asn135, Asp137, Gln139, and Glu144 each coordinate Ca(2+).

The protein belongs to the calmodulin family.

In terms of biological role, potential calcium sensor. The protein is Putative calmodulin-like protein 6 (CML6) of Oryza sativa subsp. japonica (Rice).